A 395-amino-acid chain; its full sequence is Flavohemoprotein (395 aa).

The Globin domain occupies 1-136 (MLDQQTIATI…LANVFIQRES (136 aa)). Histidine 85 serves as a coordination point for heme b. Active-site charge relay system residues include tyrosine 95 and glutamate 135. Residues 147–395 (GGWHGIRPFR…YECFGPHKVI (249 aa)) are reductase. In terms of domain architecture, FAD-binding FR-type spans 150-255 (HGIRPFRIVA…AAPHGDFYLE (106 aa)). FAD-binding positions include tyrosine 188 and 204-207 (RQYS). Residue 268–273 (GVGQTP) coordinates NADP(+). An FAD-binding site is contributed by 388-391 (CFGP).

This sequence belongs to the globin family. Two-domain flavohemoproteins subfamily. It in the C-terminal section; belongs to the flavoprotein pyridine nucleotide cytochrome reductase family. Requires heme b as cofactor. It depends on FAD as a cofactor.

It is found in the cytoplasm. The enzyme catalyses 2 nitric oxide + NADPH + 2 O2 = 2 nitrate + NADP(+) + H(+). It carries out the reaction 2 nitric oxide + NADH + 2 O2 = 2 nitrate + NAD(+) + H(+). Its function is as follows. Is involved in NO detoxification in an aerobic process, termed nitric oxide dioxygenase (NOD) reaction that utilizes O(2) and NAD(P)H to convert NO to nitrate, which protects the bacterium from various noxious nitrogen compounds. Therefore, plays a central role in the inducible response to nitrosative stress. The sequence is that of Flavohemoprotein (hmp) from Dickeya dadantii (strain 3937) (Erwinia chrysanthemi (strain 3937)).